A 403-amino-acid chain; its full sequence is Formate-dependent phosphoribosylglycinamide formyltransferase (403 aa).

Residues 27–28 and Glu-87 each bind N(1)-(5-phospho-beta-D-ribosyl)glycinamide; that span reads EL. ATP-binding positions include Arg-120, Lys-161, 166 to 171, 201 to 204, and Glu-209; these read SSGKGQ and EGFV. One can recognise an ATP-grasp domain in the interval 125-319; the sequence is RLAAEELGLP…EFELHARAIL (195 aa). The Mg(2+) site is built by Glu-278 and Glu-290. Residues Asp-297, Lys-366, and 373-374 contribute to the N(1)-(5-phospho-beta-D-ribosyl)glycinamide site; that span reads RR. The tract at residues 382-403 is disordered; it reads GPDVETARSRAREAASRVEPVA. Positions 386–397 are enriched in basic and acidic residues; sequence ETARSRAREAAS.

It belongs to the PurK/PurT family. In terms of assembly, homodimer.

The catalysed reaction is N(1)-(5-phospho-beta-D-ribosyl)glycinamide + formate + ATP = N(2)-formyl-N(1)-(5-phospho-beta-D-ribosyl)glycinamide + ADP + phosphate + H(+). Its pathway is purine metabolism; IMP biosynthesis via de novo pathway; N(2)-formyl-N(1)-(5-phospho-D-ribosyl)glycinamide from N(1)-(5-phospho-D-ribosyl)glycinamide (formate route): step 1/1. Functionally, involved in the de novo purine biosynthesis. Catalyzes the transfer of formate to 5-phospho-ribosyl-glycinamide (GAR), producing 5-phospho-ribosyl-N-formylglycinamide (FGAR). Formate is provided by PurU via hydrolysis of 10-formyl-tetrahydrofolate. The polypeptide is Formate-dependent phosphoribosylglycinamide formyltransferase (Rhodococcus jostii (strain RHA1)).